Here is an 854-residue protein sequence, read N- to C-terminus: V-type proton ATPase 116 kDa subunit a 2 (854 aa).

Residues 1–393 (MGSLFRSETM…DAYGVGSYQE (393 aa)) lie on the Cytoplasmic side of the membrane. The helical transmembrane segment at 394 to 412 (VNPALFTIITFPFLFAVMF) threads the bilayer. Over 413–414 (GD) the chain is Vacuolar. Residues 415–431 (FGHGFVMFLFALLLVLN) traverse the membrane as a helical segment. At 432-445 (ENHPRLNQSQEIMR) the chain is on the cytoplasmic side. The chain crosses the membrane as a helical span at residues 446–475 (MFFNGRYILLLMGLFSVYTGLIYNDCFSKS). Topologically, residues 476–549 (VNLFGSRWNV…ATNRLTFLNS (74 aa)) are vacuolar. Residues 550-569 (FKMKMSVILGITHMTFGVIL) traverse the membrane as a helical segment. Residues 570-587 (GIFNHLHFRKKFNICLVS) lie on the Cytoplasmic side of the membrane. The helical transmembrane segment at 588–608 (IPELLFMLCIFGYLIFMIIYK) threads the bilayer. Residues 609-651 (WLVYSAETSRTAPSILIEFISMFLFLASDTGGLYPGQEHVQRL) are Vacuolar-facing. The chain crosses the membrane as a helical span at residues 652–671 (LLLITVLSVPVLFLGKPLFL). The Cytoplasmic segment spans residues 672 to 739 (LWLHRGRSCF…EILMTQIIHS (68 aa)). Phosphoserine is present on residues serine 695 and serine 700. Residues 740–764 (IEYCLGCISNTASYLRLWALSLAHA) traverse the membrane as a helical segment. The Vacuolar portion of the chain corresponds to 765–785 (QLSEVLWAMLMHVGLRVDTAY). The chain crosses the membrane as a helical span at residues 786 to 824 (GVLVLLPVIAFFAVLTIFILLIMEGLSAFLHAIRLHWVE). Over 825-854 (FQNKFYVGAGTKFVPFSFRLLSSKFSDDLA) the chain is Cytoplasmic.

The protein belongs to the V-ATPase 116 kDa subunit family. In terms of assembly, V-ATPase is a heteromultimeric enzyme made up of two complexes: the ATP-hydrolytic V1 complex and the proton translocation V0 complex. The V1 complex consists of three catalytic AB heterodimers that form a heterohexamer, three peripheral stalks each consisting of EG heterodimers, one central rotor including subunits D and F, and the regulatory subunits C and H. The proton translocation complex V0 consists of the proton transport subunit a, a ring of proteolipid subunits c9c'', rotary subunit d, subunits e and f, and the accessory subunits ATP6AP1/Ac45 and ATP6AP2/PRR. Directly interacts with PSCD2 through its N-terminal cytosolic tail in an intra-endosomal acidification-dependent manner. Disruption of this interaction results in the inhibition of endocytosis. Interacts with SPAAR. As to expression, highly expressed in lung, kidney and spleen.

The protein localises to the cell membrane. It localises to the endosome membrane. In terms of biological role, subunit of the V0 complex of vacuolar(H+)-ATPase (V-ATPase), a multisubunit enzyme composed of a peripheral complex (V1) that hydrolyzes ATP and a membrane integral complex (V0) that translocates protons. V-ATPase is responsible for acidifying and maintaining the pH of intracellular compartments and in some cell types, is targeted to the plasma membrane, where it is responsible for acidifying the extracellular environment. Essential component of the endosomal pH-sensing machinery. May play a role in maintaining the Golgi functions, such as glycosylation maturation, by controlling the Golgi pH. In aerobic conditions, involved in intracellular iron homeostasis, thus triggering the activity of Fe(2+) prolyl hydroxylase (PHD) enzymes, and leading to HIF1A hydroxylation and subsequent proteasomal degradation. This Bos taurus (Bovine) protein is V-type proton ATPase 116 kDa subunit a 2 (ATP6V0A2).